The following is an 89-amino-acid chain: Small ribosomal subunit protein uS15 (89 aa).

It belongs to the universal ribosomal protein uS15 family. Part of the 30S ribosomal subunit. Forms a bridge to the 50S subunit in the 70S ribosome, contacting the 23S rRNA.

In terms of biological role, one of the primary rRNA binding proteins, it binds directly to 16S rRNA where it helps nucleate assembly of the platform of the 30S subunit by binding and bridging several RNA helices of the 16S rRNA. Functionally, forms an intersubunit bridge (bridge B4) with the 23S rRNA of the 50S subunit in the ribosome. This chain is Small ribosomal subunit protein uS15, found in Caulobacter vibrioides (strain NA1000 / CB15N) (Caulobacter crescentus).